Reading from the N-terminus, the 95-residue chain is Integration host factor subunit beta (95 aa).

The disordered stretch occupies residues 56 to 76; that stretch reads RAPRTGRNPKTGTSVELDGKY.

This sequence belongs to the bacterial histone-like protein family. As to quaternary structure, heterodimer of an alpha and a beta chain.

This protein is one of the two subunits of integration host factor, a specific DNA-binding protein that functions in genetic recombination as well as in transcriptional and translational control. This chain is Integration host factor subunit beta, found in Shewanella woodyi (strain ATCC 51908 / MS32).